The primary structure comprises 63 residues: Large ribosomal subunit protein bL28 (63 aa).

The disordered stretch occupies residues 1-20 (MSKRCAITGKGPMVGNNVSH).

It belongs to the bacterial ribosomal protein bL28 family.

The polypeptide is Large ribosomal subunit protein bL28 (Campylobacter fetus subsp. fetus (strain 82-40)).